A 178-amino-acid polypeptide reads, in one-letter code: UPF0098 protein PYRAB11530 (178 aa).

The first 22 residues, 1 to 22, serve as a signal peptide directing secretion; it reads MRYLVPLLVFMVLGMGCLGGGG.

Belongs to the UPF0098 family.

This is UPF0098 protein PYRAB11530 from Pyrococcus abyssi (strain GE5 / Orsay).